The sequence spans 227 residues: ATP phosphoribosyltransferase (227 aa).

This sequence belongs to the ATP phosphoribosyltransferase family. Short subfamily. Heteromultimer composed of HisG and HisZ subunits.

It is found in the cytoplasm. The catalysed reaction is 1-(5-phospho-beta-D-ribosyl)-ATP + diphosphate = 5-phospho-alpha-D-ribose 1-diphosphate + ATP. Its pathway is amino-acid biosynthesis; L-histidine biosynthesis; L-histidine from 5-phospho-alpha-D-ribose 1-diphosphate: step 1/9. Its function is as follows. Catalyzes the condensation of ATP and 5-phosphoribose 1-diphosphate to form N'-(5'-phosphoribosyl)-ATP (PR-ATP). Has a crucial role in the pathway because the rate of histidine biosynthesis seems to be controlled primarily by regulation of HisG enzymatic activity. The protein is ATP phosphoribosyltransferase of Bordetella avium (strain 197N).